Reading from the N-terminus, the 321-residue chain is NADH-ubiquinone oxidoreductase chain 1 (321 aa).

Transmembrane regions (helical) follow at residues 6-26, 67-87, 103-123, 143-163, 174-194, 220-240, 256-276, and 296-316; these read IVPP…LTAL, LLAT…LALA, LGLL…LWSG, ISYE…SGGF, PLYL…STLA, ASPF…MNTL, ALFT…FLWV, and FLPM…SMFG.

The protein belongs to the complex I subunit 1 family.

It is found in the mitochondrion inner membrane. It catalyses the reaction a ubiquinone + NADH + 5 H(+)(in) = a ubiquinol + NAD(+) + 4 H(+)(out). Core subunit of the mitochondrial membrane respiratory chain NADH dehydrogenase (Complex I) that is believed to belong to the minimal assembly required for catalysis. Complex I functions in the transfer of electrons from NADH to the respiratory chain. The immediate electron acceptor for the enzyme is believed to be ubiquinone. This is NADH-ubiquinone oxidoreductase chain 1 (MT-ND1) from Alligator mississippiensis (American alligator).